The primary structure comprises 512 residues: Maturase K (512 aa).

The protein belongs to the intron maturase 2 family. MatK subfamily.

It localises to the plastid. Its subcellular location is the chloroplast. Functionally, usually encoded in the trnK tRNA gene intron. Probably assists in splicing its own and other chloroplast group II introns. This Zantedeschia aethiopica (White calla lily) protein is Maturase K.